The chain runs to 599 residues: UvrABC system protein C (599 aa).

Residues 15 to 93 (PCPGVYRMLD…IKALQPRYNV (79 aa)) enclose the GIY-YIG domain. The UVR domain maps to 202–237 (QQVINELVIRMEEASGQLAFEQAAYYRDRIASLRQI).

It belongs to the UvrC family. In terms of assembly, interacts with UvrB in an incision complex.

It localises to the cytoplasm. Its function is as follows. The UvrABC repair system catalyzes the recognition and processing of DNA lesions. UvrC both incises the 5' and 3' sides of the lesion. The N-terminal half is responsible for the 3' incision and the C-terminal half is responsible for the 5' incision. This chain is UvrABC system protein C, found in Nitrosococcus oceani (strain ATCC 19707 / BCRC 17464 / JCM 30415 / NCIMB 11848 / C-107).